Reading from the N-terminus, the 453-residue chain is UDP-N-acetylmuramate--L-alanine ligase (453 aa).

Residue 112–118 participates in ATP binding; the sequence is GTHGKTT.

The protein belongs to the MurCDEF family.

It is found in the cytoplasm. It catalyses the reaction UDP-N-acetyl-alpha-D-muramate + L-alanine + ATP = UDP-N-acetyl-alpha-D-muramoyl-L-alanine + ADP + phosphate + H(+). Its pathway is cell wall biogenesis; peptidoglycan biosynthesis. Its function is as follows. Cell wall formation. The sequence is that of UDP-N-acetylmuramate--L-alanine ligase from Lawsonia intracellularis (strain PHE/MN1-00).